Reading from the N-terminus, the 334-residue chain is Cytochrome c551 peroxidase (334 aa).

The N-terminal stretch at methionine 1–alanine 26 is a signal peptide. The heme c site is built by cysteine 65, cysteine 68, histidine 69, cysteine 209, cysteine 212, histidine 213, histidine 270, and methionine 284. The disordered stretch occupies residues phenylalanine 315–glutamate 334. The segment covering proline 322–glutamate 334 has biased composition (polar residues).

Binds 2 heme c groups covalently per subunit.

It localises to the periplasm. The catalysed reaction is 2 Fe(II)-[cytochrome c] + H2O2 + 2 H(+) = 2 Fe(III)-[cytochrome c] + 2 H2O. The chain is Cytochrome c551 peroxidase (ccp) from Nitrosomonas europaea (strain ATCC 19718 / CIP 103999 / KCTC 2705 / NBRC 14298).